The primary structure comprises 87 residues: DNA-directed RNA polymerase subunit omega (87 aa).

This sequence belongs to the RNA polymerase subunit omega family. In terms of assembly, the RNAP catalytic core consists of 2 alpha, 1 beta, 1 beta' and 1 omega subunit. When a sigma factor is associated with the core the holoenzyme is formed, which can initiate transcription.

It catalyses the reaction RNA(n) + a ribonucleoside 5'-triphosphate = RNA(n+1) + diphosphate. Functionally, promotes RNA polymerase assembly. Latches the N- and C-terminal regions of the beta' subunit thereby facilitating its interaction with the beta and alpha subunits. The chain is DNA-directed RNA polymerase subunit omega from Pseudomonas putida (strain W619).